The following is a 373-amino-acid chain: ATP phosphoribosyltransferase regulatory subunit (373 aa).

This sequence belongs to the class-II aminoacyl-tRNA synthetase family. HisZ subfamily. Heteromultimer composed of HisG and HisZ subunits.

The protein localises to the cytoplasm. Its pathway is amino-acid biosynthesis; L-histidine biosynthesis; L-histidine from 5-phospho-alpha-D-ribose 1-diphosphate: step 1/9. Required for the first step of histidine biosynthesis. May allow the feedback regulation of ATP phosphoribosyltransferase activity by histidine. The protein is ATP phosphoribosyltransferase regulatory subunit of Rhizobium johnstonii (strain DSM 114642 / LMG 32736 / 3841) (Rhizobium leguminosarum bv. viciae).